We begin with the raw amino-acid sequence, 414 residues long: Tyrosine--tRNA ligase (414 aa).

Tyrosine 35 is a binding site for L-tyrosine. The 'HIGH' region signature appears at 40–49; sequence PTADSLHVGH. Tyrosine 164 and glutamine 168 together coordinate L-tyrosine. The 'KMSKS' region motif lies at 226-230; it reads KFGKT. Position 229 (lysine 229) interacts with ATP. The S4 RNA-binding domain maps to 347–414; it reads TKVIDALIEV…KKKYFVILIK (68 aa).

Belongs to the class-I aminoacyl-tRNA synthetase family. TyrS type 1 subfamily. Homodimer.

It is found in the cytoplasm. The catalysed reaction is tRNA(Tyr) + L-tyrosine + ATP = L-tyrosyl-tRNA(Tyr) + AMP + diphosphate + H(+). Catalyzes the attachment of tyrosine to tRNA(Tyr) in a two-step reaction: tyrosine is first activated by ATP to form Tyr-AMP and then transferred to the acceptor end of tRNA(Tyr). This chain is Tyrosine--tRNA ligase, found in Mycoplasma mycoides subsp. mycoides SC (strain CCUG 32753 / NCTC 10114 / PG1).